The following is a 542-amino-acid chain: E3 ubiquitin-protein ligase RNF217 (542 aa).

Disordered regions lie at residues 1 to 140 (MGEE…TRVG) and 176 to 216 (APAS…TDSL). The segment covering 37 to 50 (SARAPPLRAASAEP) has biased composition (low complexity). Residues 122–132 (DEQQEAPPGEE) show a composition bias toward acidic residues. The span at 185–196 (PASPPGAPPVLN) shows a compositional bias: pro residues. The segment covering 197 to 213 (PPSTRSSFPSPRLSLPT) has biased composition (low complexity). Positions 259-478 (MVLMCRVCLE…LSIFGCKYRY (220 aa)) are TRIAD supradomain. Positions 263, 266, 283, 286, 383, 386, 391, 396, 423, and 426 each coordinate Zn(2+). The RING-type 1 zinc-finger motif lies at 263-309 (CRVCLEDKPIKPLPCCKKAVCEECLKVYLSAQVQLGQVEIKCPITEC). Residues 328-396 (IKYKYFLELG…HSPWHEGVNC (69 aa)) form an IBR-type zinc finger. Residues 423–452 (CPKCKIHIQRTEGCDHMTCSQCNTNFCYRC) form an RING-type 2; atypical zinc finger. Cys436 is an active-site residue. Zn(2+)-binding residues include Cys441, Cys444, Cys449, Cys452, His465, and Cys474. The chain crosses the membrane as a helical span at residues 503–523 (LIMVLGLALGAIAVVIGLFVF).

It belongs to the RBR family. RNF217 subfamily. Interacts with HAX1. As to expression, mainly expressed in testis and skeletal muscle.

The protein localises to the membrane. It localises to the cytoplasm. The catalysed reaction is [E2 ubiquitin-conjugating enzyme]-S-ubiquitinyl-L-cysteine + [acceptor protein]-L-lysine = [E2 ubiquitin-conjugating enzyme]-L-cysteine + [acceptor protein]-N(6)-ubiquitinyl-L-lysine.. It functions in the pathway protein modification; protein ubiquitination. Its function is as follows. E3 ubiquitin-protein ligase which accepts ubiquitin from E2 ubiquitin-conjugating enzymes in the form of a thioester and then directly transfers the ubiquitin to targeted substrates. Mediates the degradation of the iron exporter ferroportin/SLC40A1 and thus regulates iron homeostasis. The sequence is that of E3 ubiquitin-protein ligase RNF217 (RNF217) from Homo sapiens (Human).